Reading from the N-terminus, the 557-residue chain is Probable protein kinase UbiB (557 aa).

Positions alanine 121 to alanine 509 constitute a Protein kinase domain. Residues leucine 127 to valine 135 and lysine 154 each bind ATP. Aspartate 289 acts as the Proton acceptor in catalysis. A run of 2 helical transmembrane segments spans residues valine 506–histidine 526 and valine 535–leucine 555.

This sequence belongs to the ABC1 family. UbiB subfamily.

Its subcellular location is the cell inner membrane. Its pathway is cofactor biosynthesis; ubiquinone biosynthesis [regulation]. Functionally, is probably a protein kinase regulator of UbiI activity which is involved in aerobic coenzyme Q (ubiquinone) biosynthesis. The sequence is that of Probable protein kinase UbiB from Xanthomonas campestris pv. campestris (strain 8004).